Here is a 116-residue protein sequence, read N- to C-terminus: Protein lin-52 homolog (116 aa).

A phosphoserine mark is found at Ser-28 and Ser-53.

It belongs to the lin-52 family. In terms of assembly, component of the DREAM complex (also named LINC complex) at least composed of E2F4, E2F5, LIN9, LIN37, LIN52, LIN54, MYBL1, MYBL2, RBL1, RBL2, RBBP4, TFDP1 and TFDP2. The complex exists in quiescent cells where it represses cell cycle-dependent genes. It dissociates in S phase when LIN9, LIN37, LIN52 and LIN54 form a subcomplex that binds to MYBL2.

In Homo sapiens (Human), this protein is Protein lin-52 homolog (LIN52).